The sequence spans 459 residues: Cysteine--tRNA ligase (459 aa).

Zn(2+) is bound at residue cysteine 31. The 'HIGH' region signature appears at 33 to 43; that stretch reads PTVYDNPHIGN. The Zn(2+) site is built by cysteine 216, histidine 241, and glutamate 245. A 'KMSKS' region motif is present at residues 274 to 278; that stretch reads KMSKS. Lysine 277 provides a ligand contact to ATP.

It belongs to the class-I aminoacyl-tRNA synthetase family. As to quaternary structure, monomer. It depends on Zn(2+) as a cofactor.

It localises to the cytoplasm. It carries out the reaction tRNA(Cys) + L-cysteine + ATP = L-cysteinyl-tRNA(Cys) + AMP + diphosphate. In Rickettsia canadensis (strain McKiel), this protein is Cysteine--tRNA ligase.